The following is a 184-amino-acid chain: Outer-membrane lipoprotein carrier protein (184 aa).

An N-terminal signal peptide occupies residues 1 to 19 (MKAFLKILMVLIFVSVAYA).

It belongs to the LolA family. In terms of assembly, monomer.

The protein localises to the periplasm. In terms of biological role, participates in the translocation of lipoproteins from the inner membrane to the outer membrane. Only forms a complex with a lipoprotein if the residue after the N-terminal Cys is not an aspartate (The Asp acts as a targeting signal to indicate that the lipoprotein should stay in the inner membrane). This Helicobacter pylori (strain P12) protein is Outer-membrane lipoprotein carrier protein.